A 308-amino-acid chain; its full sequence is NAD kinase (308 aa).

The active-site Proton acceptor is aspartate 86. Residues 86–87, arginine 91, 160–161, aspartate 190, and 201–206 each bind NAD(+); these read DG, NE, and TAYAFS.

This sequence belongs to the NAD kinase family. A divalent metal cation is required as a cofactor.

It is found in the cytoplasm. The catalysed reaction is NAD(+) + ATP = ADP + NADP(+) + H(+). Its function is as follows. Involved in the regulation of the intracellular balance of NAD and NADP, and is a key enzyme in the biosynthesis of NADP. Catalyzes specifically the phosphorylation on 2'-hydroxyl of the adenosine moiety of NAD to yield NADP. The sequence is that of NAD kinase from Mycolicibacterium paratuberculosis (strain ATCC BAA-968 / K-10) (Mycobacterium paratuberculosis).